We begin with the raw amino-acid sequence, 2788 residues long: Multiple epidermal growth factor-like domains protein 8 (2788 aa).

A signal peptide spans 1–27 (MALGGALAAALALAFAVLGPLSHKVLA). At 28 to 2590 (GDCKGQRQVL…FFRQDQAHID (2563 aa)) the chain is on the extracellular side. 6 disulfides stabilise this stretch: Cys30–Cys57, Cys142–Cys152, Cys146–Cys158, Cys174–Cys184, Cys178–Cys191, and Cys193–Cys202. A CUB 1 domain is found at 30–140 (CKGQRQVLRE…LGFNASFRFS (111 aa)). N-linked (GlcNAc...) asparagine glycosylation occurs at Asn50. EGF-like domains are found at residues 138–168 (RFSL…GGPD) and 170–203 (GLQE…RACD). Kelch repeat units lie at residues 241–287 (LLAV…AVAW), 290–338 (FLVL…AGHA), 346–399 (WLYV…FHAP), 402–453 (TLLV…FHTA), 459–511 (YMVV…APPS), and 525–575 (VLLV…SRDP). 3 consecutive PSI domains span residues 561–613 (YCSM…SDCQ), 847–899 (ACSS…ALCP), and 900–947 (LCEE…EECP). An N-linked (GlcNAc...) asparagine glycan is attached at Asn1048. The region spanning 1074–1115 (DVDECRLGLARCHPRATCLNTPLSYECHCQRGYQGDGITHCN) is the EGF-like 3; calcium-binding domain. 16 disulfides stabilise this stretch: Cys1078/Cys1091, Cys1085/Cys1100, Cys1102/Cys1114, Cys1163/Cys1171, Cys1165/Cys1179, Cys1182/Cys1191, Cys1194/Cys1208, Cys1211/Cys1224, Cys1213/Cys1231, Cys1233/Cys1242, Cys1245/Cys1259, Cys1263/Cys1302, Cys1336/Cys1367, Cys1407/Cys1421, Cys1415/Cys1433, and Cys1435/Cys1444. 2 consecutive Laminin EGF-like domains span residues 1163–1210 (CGCN…GCRP) and 1211–1261 (CQCN…SCFR). A CUB 2 domain is found at 1263–1405 (CGGRALLTNV…WGFNASVGSA (143 aa)). N-linked (GlcNAc...) asparagine glycosylation occurs at Asn1271. Position 1353 is a phosphothreonine (Thr1353). In terms of domain architecture, EGF-like 4 spans 1403–1445 (GSARCGSGGPGSCPVPQECVPQDGAAGAGLCRCPQGWAGPHCR). 6 Kelch repeats span residues 1522–1570 (TLWM…SFHA), 1580–1626 (AMYL…HTLT), 1632–1678 (SLLL…SAVY), 1684–1734 (SLYV…HASA), 1739–1786 (TMVV…ESVA), and 1795–1840 (RLYI…WCHG). PSI domains lie at 1819 to 1859 (PCRL…PPCS), 1867 to 1922 (ECRR…NDCR), 2003 to 2061 (PCHL…ESCS), and 2063 to 2120 (GCAQ…LSCP). N-linked (GlcNAc...) asparagine glycosylation occurs at Asn2009. The EGF-like 5 domain maps to 2121–2159 (PEDECANGHHDCNETQNCHDQPHGYECSCKTGYTMDNVT). 2 disulfides stabilise this stretch: Cys2125–Cys2138 and Cys2132–Cys2147. 2 N-linked (GlcNAc...) asparagine glycosylation sites follow: Asn2157 and Asn2172. Intrachain disulfides connect Cys2196-Cys2204, Cys2198-Cys2213, Cys2216-Cys2225, and Cys2228-Cys2242. Laminin EGF-like domains follow at residues 2196-2244 (CRCN…TCRP) and 2323-2386 (CQCN…QCYR). Positions 2465-2507 (HTVHIQPPPPPPPPPPPADGVPRVASDLGGLGTGSGSGSPVEP) are disordered. Pro residues predominate over residues 2470–2483 (QPPPPPPPPPPPAD). Residues 2591 to 2611 (LFVFFSVFFSCFFLFLSLCVL) traverse the membrane as a helical segment. The Cytoplasmic segment spans residues 2612–2788 (LWKAKQALDQ…SQDNLTSMSL (177 aa)). Positions 2761 to 2775 (GGAGGSGHGGGGGRK) are enriched in gly residues. The tract at residues 2761-2788 (GGAGGSGHGGGGGRKGLLSQDNLTSMSL) is disordered. Over residues 2779–2788 (SQDNLTSMSL) the composition is skewed to polar residues.

In terms of tissue distribution, expressed in brain.

The protein resides in the membrane. Acts as a negative regulator of hedgehog signaling. This Rattus norvegicus (Rat) protein is Multiple epidermal growth factor-like domains protein 8 (Megf8).